Reading from the N-terminus, the 292-residue chain is Imipenem-hydrolyzing beta-lactamase (292 aa).

An N-terminal signal peptide occupies residues 1-27 (MSLNVKQSRIAILFSSCLISISFFSQA). A disulfide bridge connects residues Cys70 and Cys240. Residue Ser71 is the Acyl-ester intermediate of the active site. A substrate-binding site is contributed by 236 to 238 (KTG).

This sequence belongs to the class-A beta-lactamase family.

The enzyme catalyses a beta-lactam + H2O = a substituted beta-amino acid. Its function is as follows. Hydrolyzes carbapenems such as imipenem, which are extended-spectrum beta-lactam antibiotics. In Enterobacter cloacae, this protein is Imipenem-hydrolyzing beta-lactamase (nmcA).